The following is a 393-amino-acid chain: Elongation factor Tu (393 aa).

The 199-residue stretch at 6–204 (KPHINVGTIG…ALEKIELPVR (199 aa)) folds into the tr-type G domain. Residues 15 to 22 (GHVDHGKT) are G1. 15–22 (GHVDHGKT) serves as a coordination point for GTP. Thr22 is a Mg(2+) binding site. A G2 region spans residues 58-62 (GITIS). The interval 79 to 82 (DCPG) is G3. Residues 79–83 (DCPGH) and 134–137 (NKCD) contribute to the GTP site. Residues 134–137 (NKCD) are G4. Residues 172 to 174 (SAV) form a G5 region.

Belongs to the TRAFAC class translation factor GTPase superfamily. Classic translation factor GTPase family. EF-Tu/EF-1A subfamily. Monomer.

It localises to the cytoplasm. The catalysed reaction is GTP + H2O = GDP + phosphate + H(+). Its function is as follows. GTP hydrolase that promotes the GTP-dependent binding of aminoacyl-tRNA to the A-site of ribosomes during protein biosynthesis. The protein is Elongation factor Tu of Anaplasma marginale (strain St. Maries).